Reading from the N-terminus, the 519-residue chain is Membrane-bound glycerophospholipid O-acyltransferase 2 (519 aa).

Helical transmembrane passes span 22-42 (PIDQ…AVWF), 61-81 (TLLG…HFLV), 88-108 (CIMI…FALG), 184-204 (FMGI…FIEG), 236-256 (LLVC…LPVE), and 263-283 (FQAT…LLAA). Active-site residues include Asn-341 and His-372. The next 3 helical transmembrane spans lie at 365 to 385 (FFLS…FLTG), 415 to 435 (LITW…FVLL), and 443 to 463 (FYSS…LLLP). Residues 497 to 519 (FSTMNNVCNQNRDTGSRHSSLTQ) form a disordered region.

Belongs to the membrane-bound acyltransferase family. As to expression, highly expressed in epididymis, brain, testis, and ovary.

It localises to the endoplasmic reticulum membrane. It catalyses the reaction a 1-acyl-sn-glycero-3-phosphocholine + an acyl-CoA = a 1,2-diacyl-sn-glycero-3-phosphocholine + CoA. The catalysed reaction is a 1-acyl-sn-glycero-3-phosphoethanolamine + an acyl-CoA = a 1,2-diacyl-sn-glycero-3-phosphoethanolamine + CoA. The enzyme catalyses a 1-O-(1Z-alkenyl)-sn-glycero-3-phosphocholine + (9Z)-octadecenoyl-CoA = 1-O-(1Z)-alkenyl-2-(9Z)-octadecenoyl-sn-glycero-3-phosphocholine + CoA. It carries out the reaction a 1-O-(1Z-alkenyl)-sn-glycero-3-phosphoethanolamine + (9Z)-octadecenoyl-CoA = 1-O-(1Z)-alkenyl-2-(9Z)-octadecenoyl-sn-glycero-3-phosphoethanolamine + CoA. It catalyses the reaction 1-octadecanoyl-sn-glycero-3-phosphoethanolamine + (9Z)-octadecenoyl-CoA = 1-octadecanoyl-2-(9Z-octadecenoyl)-sn-glycero-3-phosphoethanolamine + CoA. The catalysed reaction is 1-octadecanoyl-sn-glycero-3-phosphocholine + (9Z)-octadecenoyl-CoA = 1-octadecanoyl-2-(9Z-octadecenoyl)-sn-glycero-3-phosphocholine + CoA. The enzyme catalyses 1-(9Z-octadecenoyl)-sn-glycero-3-phosphoethanolamine + (9Z)-octadecenoyl-CoA = 1,2-di-(9Z-octadecenoyl)-sn-glycero-3-phosphoethanolamine + CoA. It carries out the reaction 1-hexadecanoyl-sn-glycero-3-phosphoethanolamine + (9Z)-octadecenoyl-CoA = 1-hexadecanoyl-2-(9Z-octadecenoyl)-sn-glycero-3-phosphoethanolamine + CoA. It catalyses the reaction 1-hexadecanoyl-sn-glycero-3-phosphocholine + (9Z)-octadecenoyl-CoA = 1-hexadecanoyl-2-(9Z-octadecenoyl)-sn-glycero-3-phosphocholine + CoA. The catalysed reaction is (9Z)-hexadecenoyl-CoA + 1-hexadecanoyl-sn-glycero-3-phosphocholine = 1-hexadecanoyl-2-(9Z-hexadecenoyl)-sn-glycero-3-phosphocholine + CoA. The enzyme catalyses 1-hexadecanoyl-sn-glycero-3-phosphoethanolamine + (9Z)-hexadecenoyl-CoA = 1-hexadecanoyl-2-(9Z)-hexadecenoyl-sn-glycero-3-phosphoethanolamine + CoA. It carries out the reaction (9Z,12Z)-octadecadienoyl-CoA + 1-hexadecanoyl-sn-glycero-3-phosphocholine = 1-hexadecanoyl-2-(9Z,12Z-octadecadienoyl)-sn-glycero-3-phosphocholine + CoA. It participates in lipid metabolism; phospholipid metabolism. Partially inhibited by thimerosal. Functionally, acyltransferase which catalyzes the transfer of an acyl group from an acyl-CoA to a lysophospholipid leading to the production of a phospholipid and participates in the reacylation step of the phospholipid remodeling pathway also known as the Lands cycle. Catalyzes the acylation of lysophosphatidylcholine (1-acyl-sn-glycero-3-phosphocholine or LPC) and to a lesser extend lysophosphatidylethanolamine (1-acyl-sn-glycero-3-phosphoethanolamine or LPE). Does not acylates lysophosphatidic acid (LPA) and lysophosphatidylserine. Prefers oleoyl-CoA as the acyl donor. May be involved in chondrocyte differentiation. This is Membrane-bound glycerophospholipid O-acyltransferase 2 from Mus musculus (Mouse).